Reading from the N-terminus, the 660-residue chain is Kinesin-like protein KIF2A (660 aa).

A disordered region spans residues 1 to 140 (MVTSLNEDNE…QQELREKRAQ (140 aa)). The tract at residues 1 to 171 (MVTSLNEDNE…LDYRPLTTAD (171 aa)) is globular. Residue Ser-48 is modified to Phosphoserine. Phosphothreonine occurs at positions 51 and 70. Ser-73 is modified (phosphoserine). Lys-75 bears the N6-acetyllysine mark. Positions 96-106 (LPEQSSSAQQN) are enriched in polar residues. Residues 113–140 (CVKEVEKLQEKREKRRLQQQELREKRAQ) are compositionally biased toward basic and acidic residues. The region spanning 177-507 (RICVCVRKRP…LRYANRVKEL (331 aa)) is the Kinesin motor domain. Residue 267 to 274 (GQTGSGKT) participates in ATP binding. A coiled-coil region spans residues 614 to 653 (ATQLEAILEQKIDILTELRDKVKSFRAALQEEEQASKQIN).

This sequence belongs to the TRAFAC class myosin-kinesin ATPase superfamily. Kinesin family. MCAK/KIF2 subfamily. In terms of assembly, interacts with AURKA and PLK1. Interacts with PSRC1. Interacts with MCRS1; the interaction enhances recruitment of KIF2A to the minus ends of spindle microtubules which promotes chromosome alignment.

Its subcellular location is the cytoplasm. The protein localises to the cytoskeleton. It localises to the microtubule organizing center. It is found in the centrosome. The protein resides in the spindle pole. Its subcellular location is the spindle. Its function is as follows. Plus end-directed microtubule-dependent motor required for normal brain development. May regulate microtubule dynamics during axonal growth. Required for normal progression through mitosis. Required for normal congress of chromosomes at the metaphase plate. Required for normal spindle dynamics during mitosis. Promotes spindle turnover. Implicated in formation of bipolar mitotic spindles. Has microtubule depolymerization activity. The sequence is that of Kinesin-like protein KIF2A (KIF2A) from Bos taurus (Bovine).